The sequence spans 138 residues: rRNA methyltransferase 1, mitochondrial (138 aa).

Residues 1-21 (MNNQPCSIVWRRFLTSKVKPA) constitute a mitochondrion transit peptide. Residues 92–113 (KQDILSSKRQQEEHKSKYSRKS) are disordered.

This sequence belongs to the class IV-like SAM-binding methyltransferase superfamily. RNA methyltransferase TrmH family.

The protein resides in the mitochondrion. The enzyme catalyses a guanosine in 21S rRNA + S-adenosyl-L-methionine = a 2'-O-methylguanosine in 21S rRNA + S-adenosyl-L-homocysteine + H(+). S-adenosyl-L-methionine-dependent 2'-O-ribose methyltransferase that catalyzes the formation of the 2'-O-methylguanosine corresponding to position 2270 in S.cerevisiae 21S mitochondrial large ribosomal RNA, a universally conserved modification in the peptidyl transferase domain of the 21S rRNA. The sequence is that of rRNA methyltransferase 1, mitochondrial from Lachancea kluyveri (strain ATCC 58438 / CBS 3082 / BCRC 21498 / NBRC 1685 / JCM 7257 / NCYC 543 / NRRL Y-12651) (Yeast).